Here is a 522-residue protein sequence, read N- to C-terminus: Maturase K (522 aa).

The protein belongs to the intron maturase 2 family. MatK subfamily.

The protein resides in the plastid. It localises to the chloroplast. Usually encoded in the trnK tRNA gene intron. Probably assists in splicing its own and other chloroplast group II introns. The sequence is that of Maturase K from Iris domestica (Leopard lily).